The chain runs to 421 residues: Histidine--tRNA ligase (421 aa).

The protein belongs to the class-II aminoacyl-tRNA synthetase family. Homodimer.

Its subcellular location is the cytoplasm. It carries out the reaction tRNA(His) + L-histidine + ATP = L-histidyl-tRNA(His) + AMP + diphosphate + H(+). This is Histidine--tRNA ligase from Coxiella burnetii (strain Dugway 5J108-111).